A 118-amino-acid chain; its full sequence is Large ribosomal subunit protein bL20 (118 aa).

Belongs to the bacterial ribosomal protein bL20 family.

Functionally, binds directly to 23S ribosomal RNA and is necessary for the in vitro assembly process of the 50S ribosomal subunit. It is not involved in the protein synthesizing functions of that subunit. The protein is Large ribosomal subunit protein bL20 of Yersinia pseudotuberculosis serotype O:1b (strain IP 31758).